The primary structure comprises 360 residues: Inward rectifier potassium channel 13 (360 aa).

Over 1 to 50 the chain is Cytoplasmic; it reads MDSSNCKVIAPLLSQRYRRMVTKDGHSTLQMDGAQRGLAYLRDAWGILMD. A helical transmembrane segment spans residues 51–77; sequence MRWRWMMLVFSASFVVHWLVFAVLWYV. Residues 78-105 lie on the Extracellular side of the membrane; it reads LAEMNGDLELDHDAPPENHTICVKYITS. An intramembrane region (helical; Pore-forming) is located at residues 106 to 122; that stretch reads FTAAFSFSLETQLTIGY. The Selectivity filter motif lies at 119-124; sequence TIGYGT. Over 123-131 the chain is Extracellular; the sequence is GTMFPSGDC. The chain crosses the membrane as a helical span at residues 132 to 157; it reads PSAIALLAIQMLLGLMLEAFITGAFV. Topologically, residues 158–360 are cytoplasmic; sequence AKIARPKNRA…FQISETGLTE (203 aa). Position 201 is a phosphoserine; by PKC (serine 201). The residue at position 287 (serine 287) is a Phosphoserine; by PKA.

The protein belongs to the inward rectifier-type potassium channel (TC 1.A.2.1) family. KCNJ13 subfamily. Homotetramer. Interacts with RAB28; the interaction may facilitate cone outer segments phagocytosis. Post-translationally, phosphorylation at Ser-201 by PKC strongly inhibits ionic currents, while phosphorylation at Ser-287 by PKA increases them. As to expression, predominantly expressed in small intestine. Expression is also detected in stomach, kidney, and all central nervous system regions tested with the exception of spinal cord.

It localises to the membrane. Its subcellular location is the cell membrane. The enzyme catalyses K(+)(in) = K(+)(out). Its activity is regulated as follows. Inhibited by Ba(2+) and Cs(+), although sensitivity to those inhibitors is much lower than in other Kir channels. Its function is as follows. Inward rectifier potassium channels are characterized by a greater tendency to allow potassium to flow into the cell rather than out of it. Their voltage dependence is regulated by the concentration of extracellular potassium; as external potassium is raised, the voltage range of the channel opening shifts to more positive voltages. The inward rectification is mainly due to the blockage of outward current by internal magnesium. KCNJ13 has a very low single channel conductance, low sensitivity to block by external barium and cesium, and no dependence of its inward rectification properties on the internal blocking particle magnesium. This chain is Inward rectifier potassium channel 13 (KCNJ13), found in Homo sapiens (Human).